Consider the following 459-residue polypeptide: Methionine aminopeptidase 2-1 (459 aa).

The segment covering 1 to 12 (MGSKSPEDHRQG) has biased composition (basic and acidic residues). The tract at residues 1 to 79 (MGSKSPEDHR…RKRNKKKSKK (79 aa)) is disordered. Residues 43–54 (GQDEDGDDDDDE) show a composition bias toward acidic residues. A compositionally biased stretch (basic residues) spans 67–79 (KKKRKRNKKKSKK). Histidine 210 is a substrate binding site. Positions 231, 242, and 311 each coordinate a divalent metal cation. Histidine 319 is a binding site for substrate. Residues glutamate 344 and glutamate 440 each coordinate a divalent metal cation.

This sequence belongs to the peptidase M24A family. Methionine aminopeptidase eukaryotic type 2 subfamily. Requires Co(2+) as cofactor. Zn(2+) serves as cofactor. Mn(2+) is required as a cofactor. It depends on Fe(2+) as a cofactor.

The protein resides in the cytoplasm. The enzyme catalyses Release of N-terminal amino acids, preferentially methionine, from peptides and arylamides.. Cotranslationally removes the N-terminal methionine from nascent proteins. The N-terminal methionine is often cleaved when the second residue in the primary sequence is small and uncharged (Met-Ala-, Cys, Gly, Pro, Ser, Thr, or Val). The sequence is that of Methionine aminopeptidase 2-1 from Pyrenophora tritici-repentis (strain Pt-1C-BFP) (Wheat tan spot fungus).